The sequence spans 62 residues: DNA-binding protein 7b (62 aa).

The protein belongs to the 7 kDa DNA-binding/endoribonuclease P2 family. In terms of assembly, monomer.

The protein resides in the cytoplasm. Its function is as follows. Can constrain negative DNA supercoils. May be involved in maintaining the integrity of the genome at high temperature. This Acidianus hospitalis (strain W1) protein is DNA-binding protein 7b.